The following is a 294-amino-acid chain: Ribosomal RNA small subunit methyltransferase A (294 aa).

Residues asparagine 31, leucine 33, glycine 58, glutamate 79, aspartate 111, and asparagine 136 each coordinate S-adenosyl-L-methionine.

The protein belongs to the class I-like SAM-binding methyltransferase superfamily. rRNA adenine N(6)-methyltransferase family. RsmA subfamily.

It is found in the cytoplasm. It carries out the reaction adenosine(1518)/adenosine(1519) in 16S rRNA + 4 S-adenosyl-L-methionine = N(6)-dimethyladenosine(1518)/N(6)-dimethyladenosine(1519) in 16S rRNA + 4 S-adenosyl-L-homocysteine + 4 H(+). Its function is as follows. Specifically dimethylates two adjacent adenosines (A1518 and A1519) in the loop of a conserved hairpin near the 3'-end of 16S rRNA in the 30S particle. May play a critical role in biogenesis of 30S subunits. The sequence is that of Ribosomal RNA small subunit methyltransferase A from Lactobacillus acidophilus (strain ATCC 700396 / NCK56 / N2 / NCFM).